Here is a 717-residue protein sequence, read N- to C-terminus: Delta-like protein D (717 aa).

Residues 1–19 form the signal peptide; it reads MGRLMIAVLLCVMISQGFC. Topologically, residues 20–547 are extracellular; that stretch reads SGVFELKLQE…EEDDGGFPWT (528 aa). In terms of domain architecture, DSL spans 175–219; that stretch reads FVCDEHYYGEGCSVFCRPRDDTFGHFTCGERGEIICNSGWKGQYC. Cystine bridges form between cysteine 177–cysteine 186, cysteine 190–cysteine 202, cysteine 210–cysteine 219, cysteine 224–cysteine 235, cysteine 228–cysteine 241, cysteine 243–cysteine 252, cysteine 261–cysteine 266, cysteine 274–cysteine 283, cysteine 290–cysteine 302, cysteine 296–cysteine 312, cysteine 314–cysteine 323, cysteine 330–cysteine 341, cysteine 335–cysteine 350, cysteine 352–cysteine 361, cysteine 368–cysteine 379, cysteine 373–cysteine 389, cysteine 391–cysteine 400, cysteine 407–cysteine 418, cysteine 412–cysteine 427, cysteine 429–cysteine 438, cysteine 445–cysteine 456, cysteine 450–cysteine 465, cysteine 467–cysteine 476, cysteine 483–cysteine 494, cysteine 488–cysteine 503, and cysteine 505–cysteine 514. EGF-like domains are found at residues 220–253, 257–284, and 286–324; these read TEPI…KYCD, RYPG…LFCN, and DLNY…DSCE. The region spanning 326–362 is the EGF-like 4; calcium-binding domain; it reads EVNECSGSPCRNGGSCTDLENTYSCTCPPGFYGRNCE. 2 consecutive EGF-like domains span residues 364 to 401 and 403 to 439; these read SAMT…FNCE and KIDH…THCE. Residues 441–477 form the EGF-like 7; calcium-binding domain; the sequence is NIDECATYPCQNGGTCQDGLSDYTCTCPPGYTGKNCT. Residue asparagine 475 is glycosylated (N-linked (GlcNAc...) asparagine). Positions 479 to 515 constitute an EGF-like 8 domain; the sequence is AVNKCLHNPCHNGATCHEMDNRYVCACIPGYGGRNCQ. The helical transmembrane segment at 548-568 threads the bilayer; that stretch reads AVCAGIILVLLVLIGGSVFVI. Topologically, residues 569-717 are cytoplasmic; sequence YIRLKLQQRS…KDECIIATEV (149 aa). Residues 649-693 form a disordered region; sequence EDLGKEDSERSEATKCEPLDSDSEEKHRNHLKSDSSERKRTESLC.

Interacts with mib. Ubiquitinated by mib, leading to its endocytosis and subsequent degradation. Expressed in both mesodermal and neuroectodermal regions. In the developing nervous system, it is expressed in overlapping regions with deltaB (dlb) and deltaA (dla); in the neural plate, dld is expressed in patches of contiguous cells with dla, while dlb is confined to scattered cells within those patches that will differentiate as neurons. In somites, it marks the anterior part of each formed somite, while deltaC (dlc) marks the posterior part. In 24 hours embryos, expressed in the hindbrain in stripes adjacent to rhombomere boundaries, but not in the actual boundary cells.

It localises to the membrane. Its function is as follows. Acts as a ligand for Notch receptors and is involved in primary neurogenesis and somitogenesis. Can activate Notch receptors, thereby playing a key role in lateral inhibition, a process that prevents the immediate neighbors of each nascent neural cell from simultaneously embarking on neural differentiation. Required in somite segmentation to keep the oscillations of neighboring presomitic mesoderm cells synchronized. The chain is Delta-like protein D (dld) from Danio rerio (Zebrafish).